We begin with the raw amino-acid sequence, 1963 residues long: Myosin-4 (1963 aa).

Positions 28–77 (DSKKNVWIPDPEEGYLAGEITATKGDQVTIVTARGNEVTLKKELVQEMNP) constitute a Myosin N-terminal SH3-like domain. The Myosin motor domain maps to 81 to 787 (EKTEDMSNLS…VLAHLEDIRD (707 aa)). Lys125 bears the N6,N6,N6-trimethyllysine mark. 174 to 181 (GESGAGKT) contributes to the ATP binding site. 2 actin-binding regions span residues 662 to 684 (LNNL…IPNE) and 766 to 780 (RIGL…GVLA). Residues 848-1161 (MLKAGKEAEE…LEELGEKLDE (314 aa)) form an alpha-helical tailpiece (S2) region. Residues 848 to 1963 (MLKAGKEAEE…SPSRARASDF (1116 aa)) are a coiled coil. Composition is skewed to basic and acidic residues over residues 970–988 (LRKA…RSLQ) and 1133–1146 (NERQ…RAKS). 2 disordered regions span residues 970-990 (LRKA…LQDE) and 1125-1146 (SELE…RAKS). A hinge region spans residues 1162–1173 (QGGATAAQVEVN). Residues 1162 to 1963 (QGGATAAQVE…SPSRARASDF (802 aa)) form a light meromyosin (LMM) region. 2 disordered regions span residues 1317–1336 (LTSQ…RERQ) and 1912–1963 (LEDA…ASDF). Residues 1322-1336 (EEARRTADEEARERQ) are compositionally biased toward basic and acidic residues.

This sequence belongs to the TRAFAC class myosin-kinesin ATPase superfamily. Myosin family. As to quaternary structure, muscle myosin is a hexameric protein that consists of 2 heavy chain subunits (MHC), 2 alkali light chain subunits (MLC) and 2 regulatory light chain subunits (MLC-2). Forms a complex composed of chaperone unc-45, unc-54 and ubiquitin-protein ligase ufd-2; promotes poly-ubiquitination of unfolded unc-54. Within the complex interacts with unc-45 (via UCS domain) and ufd-2. Interacts with itr-1 (via c-terminal coiled coil domain). In terms of processing, unfolded unc-54 is poly-ubiquitinated by ufd-2.

It localises to the cytoplasm. It is found in the myofibril. In terms of biological role, required for muscle contraction. This chain is Myosin-4 (unc-54), found in Caenorhabditis elegans.